The sequence spans 624 residues: Probable potassium transport system protein Kup 1 (624 aa).

The next 12 membrane-spanning stretches (helical) occupy residues 10–30, 48–68, 94–114, 133–153, 159–179, 210–230, 242–262, 270–290, 331–351, 363–383, 388–408, and 413–433; these read LALGALGVVFGDIGTSPLYAL, LSLIFWSLIIIVSFKYLMIIF, PLFYIVAIFGAGLLLGDGMLT, LYPYVLPIASVILVLLFSLQA, IGYLFGPLILIWFITIAILGI, FLLGGIFLVVTGGEALFADIG, FFIALPCLLLNYFGQGANLIV, PFFMIAPPWFYLPLIIIATVA, IYVPQINFILFIGTMAFCLAF, IAVNLEMLLVDAMVAYAAVSI, TFNVIFLFGLFLLIDLAFLGA, and FITGGWVPIVLAFFIAFIMYS.

Belongs to the HAK/KUP transporter (TC 2.A.72) family.

The protein resides in the cell inner membrane. It carries out the reaction K(+)(in) + H(+)(in) = K(+)(out) + H(+)(out). Functionally, transport of potassium into the cell. Likely operates as a K(+):H(+) symporter. This Legionella pneumophila subsp. pneumophila (strain Philadelphia 1 / ATCC 33152 / DSM 7513) protein is Probable potassium transport system protein Kup 1.